A 199-amino-acid chain; its full sequence is Probable GTP-binding protein EngB (199 aa).

The EngB-type G domain occupies 24–197 (EGYEVIFAGR…GARLNTFFGY (174 aa)). GTP contacts are provided by residues 32-39 (GRSNAGKS), 59-63 (GKTQH), 77-80 (DLPG), 144-147 (TKSD), and 176-178 (FSS). Ser39 and Thr61 together coordinate Mg(2+).

Belongs to the TRAFAC class TrmE-Era-EngA-EngB-Septin-like GTPase superfamily. EngB GTPase family. Mg(2+) serves as cofactor.

Its function is as follows. Necessary for normal cell division and for the maintenance of normal septation. In Ruthia magnifica subsp. Calyptogena magnifica, this protein is Probable GTP-binding protein EngB.